Consider the following 220-residue polypeptide: Cytidylate kinase (220 aa).

11–19 (GPTASGKGT) contributes to the ATP binding site.

This sequence belongs to the cytidylate kinase family. Type 1 subfamily.

The protein localises to the cytoplasm. The enzyme catalyses CMP + ATP = CDP + ADP. It carries out the reaction dCMP + ATP = dCDP + ADP. This is Cytidylate kinase from Polynucleobacter asymbioticus (strain DSM 18221 / CIP 109841 / QLW-P1DMWA-1) (Polynucleobacter necessarius subsp. asymbioticus).